The following is a 191-amino-acid chain: Protein Ves (191 aa).

The protein belongs to the Ves family.

This is Protein Ves from Escherichia coli O7:K1 (strain IAI39 / ExPEC).